Consider the following 370-residue polypeptide: tRNA-specific 2-thiouridylase MnmA (370 aa).

ATP contacts are provided by residues 19 to 26 (AMSGGVDS) and Leu-45. Cys-113 functions as the Nucleophile in the catalytic mechanism. A disulfide bond links Cys-113 and Cys-209. Gly-137 contacts ATP. Residues 159–161 (RDQ) form an interaction with tRNA region. Residue Cys-209 is the Cysteine persulfide intermediate of the active site.

Belongs to the MnmA/TRMU family.

The protein localises to the cytoplasm. It catalyses the reaction S-sulfanyl-L-cysteinyl-[protein] + uridine(34) in tRNA + AH2 + ATP = 2-thiouridine(34) in tRNA + L-cysteinyl-[protein] + A + AMP + diphosphate + H(+). Catalyzes the 2-thiolation of uridine at the wobble position (U34) of tRNA, leading to the formation of s(2)U34. The protein is tRNA-specific 2-thiouridylase MnmA of Zymomonas mobilis subsp. mobilis (strain ATCC 31821 / ZM4 / CP4).